The sequence spans 183 residues: Ribulose bisphosphate carboxylase small subunit, chloroplastic (183 aa).

The transit peptide at 1–58 (MASSMLSTAAVACINRASPAQASMVAPFTGLKSTSAFPTTRKTTTDITSIASNGGRVQ) directs the protein to the chloroplast.

This sequence belongs to the RuBisCO small chain family. As to quaternary structure, heterohexadecamer of 8 large and 8 small subunits.

Its subcellular location is the plastid. It is found in the chloroplast. Functionally, ruBisCO catalyzes two reactions: the carboxylation of D-ribulose 1,5-bisphosphate, the primary event in carbon dioxide fixation, as well as the oxidative fragmentation of the pentose substrate. Both reactions occur simultaneously and in competition at the same active site. Although the small subunit is not catalytic it is essential for maximal activity. This chain is Ribulose bisphosphate carboxylase small subunit, chloroplastic, found in Hevea brasiliensis (Para rubber tree).